The sequence spans 423 residues: Probable sucrose-phosphate synthase (423 aa).

This sequence belongs to the glycosyltransferase 1 family.

It catalyses the reaction beta-D-fructose 6-phosphate + UDP-alpha-D-glucose = sucrose 6(F)-phosphate + UDP + H(+). Functionally, plays a role in sucrose synthesis by catalyzing the first step of sucrose biosynthesis from UDP-glucose and fructose-6-phosphate. This Thermosipho melanesiensis (strain DSM 12029 / CIP 104789 / BI429) protein is Probable sucrose-phosphate synthase.